A 314-amino-acid chain; its full sequence is Serine/threonine-protein phosphatase SIT4 (314 aa).

Positions 53, 55, 85, and 117 each coordinate Mn(2+). His118 serves as the catalytic Proton donor. Positions 167 and 241 each coordinate Mn(2+).

Belongs to the PPP phosphatase family. PP-6 (PP-V) subfamily. In terms of assembly, interacts with MDS3. Mn(2+) serves as cofactor.

It localises to the cytoplasm. It catalyses the reaction O-phospho-L-seryl-[protein] + H2O = L-seryl-[protein] + phosphate. It carries out the reaction O-phospho-L-threonyl-[protein] + H2O = L-threonyl-[protein] + phosphate. In terms of biological role, serine/threonine protein phosphatase which is involved in the dephosphorylation of the large subunit of RNA polymerase II. Is required in late G1 for normal G1 cyclin expression, bud initiation and expression of certain genes that are periodically expressed during late G1. Plays a role during hyphal growth through the regulation of cell wall biogenesis, osmosensing and protein translation. Involved in virulence in a mouse systemic infection model. This Candida albicans (strain SC5314 / ATCC MYA-2876) (Yeast) protein is Serine/threonine-protein phosphatase SIT4 (SIT4).